The sequence spans 776 residues: 5-methyltetrahydropteroyltriglutamate--homocysteine methyltransferase (776 aa).

Residues 13 to 16 and lysine 127 contribute to the 5-methyltetrahydropteroyltri-L-glutamate site; that span reads RELK. Residues 450–452 and glutamate 503 contribute to the L-homocysteine site; that span reads IGS. Residues 450–452 and glutamate 503 contribute to the L-methionine site; that span reads IGS. Tryptophan 580 is a 5-methyltetrahydropteroyltri-L-glutamate binding site. Residue aspartate 618 participates in L-homocysteine binding. Aspartate 618 contacts L-methionine. Glutamate 624 is a binding site for 5-methyltetrahydropteroyltri-L-glutamate. Residues histidine 660, cysteine 662, and glutamate 684 each coordinate Zn(2+). Histidine 713 acts as the Proton donor in catalysis. Cysteine 745 contributes to the Zn(2+) binding site.

This sequence belongs to the vitamin-B12 independent methionine synthase family. Zn(2+) is required as a cofactor.

The enzyme catalyses 5-methyltetrahydropteroyltri-L-glutamate + L-homocysteine = tetrahydropteroyltri-L-glutamate + L-methionine. It functions in the pathway amino-acid biosynthesis; L-methionine biosynthesis via de novo pathway; L-methionine from L-homocysteine (MetE route): step 1/1. Functionally, catalyzes the transfer of a methyl group from 5-methyltetrahydrofolate to homocysteine resulting in methionine formation. This chain is 5-methyltetrahydropteroyltriglutamate--homocysteine methyltransferase, found in Mesorhizobium japonicum (strain LMG 29417 / CECT 9101 / MAFF 303099) (Mesorhizobium loti (strain MAFF 303099)).